The primary structure comprises 156 residues: ATP synthase subunit b (156 aa).

A helical transmembrane segment spans residues 12 to 32 (VAFLIFVLFCMKYVWPPVITA).

The protein belongs to the ATPase B chain family. F-type ATPases have 2 components, F(1) - the catalytic core - and F(0) - the membrane proton channel. F(1) has five subunits: alpha(3), beta(3), gamma(1), delta(1), epsilon(1). F(0) has three main subunits: a(1), b(2) and c(10-14). The alpha and beta chains form an alternating ring which encloses part of the gamma chain. F(1) is attached to F(0) by a central stalk formed by the gamma and epsilon chains, while a peripheral stalk is formed by the delta and b chains.

It is found in the cell inner membrane. F(1)F(0) ATP synthase produces ATP from ADP in the presence of a proton or sodium gradient. F-type ATPases consist of two structural domains, F(1) containing the extramembraneous catalytic core and F(0) containing the membrane proton channel, linked together by a central stalk and a peripheral stalk. During catalysis, ATP synthesis in the catalytic domain of F(1) is coupled via a rotary mechanism of the central stalk subunits to proton translocation. Its function is as follows. Component of the F(0) channel, it forms part of the peripheral stalk, linking F(1) to F(0). This Pseudomonas putida (strain ATCC 47054 / DSM 6125 / CFBP 8728 / NCIMB 11950 / KT2440) protein is ATP synthase subunit b.